Reading from the N-terminus, the 778-residue chain is MRPFQLDLLFLCFFLFSQELGLQKRGCCLVLGYMAKDKFRRMNEGQVYSFSQQPQDQVVVSGQPVTLLCAIPEYDGFVLWIKDGLALGVGRDLSSYPQYLVVGNHLSGEHHLKILRAELQDDAVYECQAIQAAIRSRPARLTVLVPPDDPIILGGPVISLRAGDPLNLTCHADNAKPAASIIWLRKGEVINGATYSKTLLRDGKRESIVSTLFISPGDVENGQSIVCRATNKAIPGGKETSVTIDIQHPPLVNLSVEPQPVLEDNIVTFHCSAKANPAVTQYRWAKRGHIIKEASGELYRTTVDYTYFSEPVSCEVTNALGSTNLSRTVDVYFGPRMTSEPQSLLVDLGSDAVFSCAWIGNPSLTIVWMKRGSGVVLSNEKTLTLKSVRQEDAGKYVCRAVVPRVGAGEREVTLTVNGPPIISSTQTQHALHGEKGQIKCFIRSTPPPDRIAWSWKENVLESGTSGRYTVETVNTEEGVISTLTISNIVRADFQTIYNCTAWNSFGSDTEIIRLKEQGSEMKSGAGLEAESVPMAVIIGVAVGAGVAFLVLMATIVAFCCARSQRNLKGVVSAKNDIRVEIVHKEPSSGREAEDHTTIKQLMMDRGEFQQDSVLKQLEVLKEEEKEFQNLKDPTNGYYSVNTFKEHHSTPTISLSSCQPDLRPTGKQRVPTGMSFTNIYSTLSGQGRLYDYGQRFVLGMGSSSIELCEREFQRGSLSDSSSFLDTQCDSSVSSSGKQDGYVQFDKASKASASSSHHSQSSSQNSDPSRPLQRRMQTHV.

An N-terminal signal peptide occupies residues 1 to 21 (MRPFQLDLLFLCFFLFSQELG). Residues 22–535 (LQKRGCCLVL…GLEAESVPMA (514 aa)) lie on the Extracellular side of the membrane. 5 consecutive Ig-like C2-type domains span residues 48–142 (YSFS…ARLT), 147–243 (PDDP…TSVT), 249–330 (PPLV…RTVD), 335–415 (PRMT…VTLT), and 419–515 (PPII…IRLK). A disulfide bridge connects residues cysteine 69 and cysteine 127. Asparagine 167 carries N-linked (GlcNAc...) asparagine glycosylation. A disulfide bond links cysteine 170 and cysteine 227. An N-linked (GlcNAc...) asparagine glycan is attached at asparagine 253. A disulfide bridge connects residues cysteine 271 and cysteine 314. Asparagine 324 carries an N-linked (GlcNAc...) asparagine glycan. 2 cysteine pairs are disulfide-bonded: cysteine 356–cysteine 398 and cysteine 440–cysteine 499. Asparagine 498 carries N-linked (GlcNAc...) asparagine glycosylation. Residues 536–556 (VIIGVAVGAGVAFLVLMATIV) traverse the membrane as a helical segment. Over 557 to 778 (AFCCARSQRN…PLQRRMQTHV (222 aa)) the chain is Cytoplasmic. Residues 727–736 (CDSSVSSSGK) are compositionally biased toward polar residues. Residues 727 to 778 (CDSSVSSSGKQDGYVQFDKASKASASSSHHSQSSSQNSDPSRPLQRRMQTHV) are disordered. Low complexity predominate over residues 748–762 (KASASSSHHSQSSSQ).

This sequence belongs to the immunoglobulin superfamily. In terms of assembly, homodimer; mediates homophilic interactions to promote cell adhesion. Interacts with NPHS1; forms heterodimers with NPHS1. Interacts with NPHS2/podocin (via the C-terminus). Interacts with CASK. Interacts (via extracellular region) with MAP1B. Interacts (via extracellular region) with MYO16. Interacts (via intracellular region) with ATP1B1. Interacts (via intracellular region) with SHMT2. Interacts (via intracellular region) with UFC1. In terms of processing, undergoes proteolysis by a metalloprotease and gives rise to a soluble form. In terms of tissue distribution, expressed mainly in adult brain, bone marrow and stromal cells. Expressed in diverse regions of the brain, including the cortex, hippocampus, striatum, olfactory bulb and cerebellum. In brain, expressed in pontine nucleus neurons (at protein level). In hippocampus, produced in both the dentate granule neurons and the GABAergic neurons, but not the CA3 neurons. Expressed in subpopulations of vomeronasal sensory neurons. Expressed in a subset of neurons in dorsal root ganglia.

It is found in the cell membrane. Its subcellular location is the cell projection. The protein localises to the axon. The protein resides in the dendrite. It localises to the secreted. In terms of biological role, synaptic adhesion molecule required for the formation of target-specific synapses. Required for formation of target-specific synapses at hippocampal mossy fiber synapses. Required for formation of mossy fiber filopodia, the synaptic structures connecting dentate granule and GABA neurons. Probably acts as a homophilic adhesion molecule that promotes trans-cellular interactions and stabilize mossy fiber filipodia contact and subsequent synapse formation. Required for the coalescence of vomeronasal sensory neuron axons. May be involved in the hematopoietic supportive capacity of stroma cells; the secreted extracellular domain is directly responsible for supporting hematopoietic stem cells. This is Kin of IRRE-like protein 3 (Kirrel3) from Mus musculus (Mouse).